A 189-amino-acid chain; its full sequence is MDERRTVKVSKYLSKHLRHQPERIGLTLDENGWVAVEELLRAAARHGFAFSRAELDHVVAANDKRRFTVENGCAADGVHGDRIRANQGHTVAVDLDLPPAEPPAHLYHGTVARVMDAIRTEGLRPMARHHVHLSPDRETATRVGARRGRPLVLTVDAGAMHRAGHVFRVSANGVWLADAVPPRFLLLRG.

The protein belongs to the KptA/TPT1 family.

Functionally, removes the 2'-phosphate from RNA via an intermediate in which the phosphate is ADP-ribosylated by NAD followed by a presumed transesterification to release the RNA and generate ADP-ribose 1''-2''-cyclic phosphate (APPR&gt;P). May function as an ADP-ribosylase. The protein is Probable RNA 2'-phosphotransferase of Streptomyces griseus subsp. griseus (strain JCM 4626 / CBS 651.72 / NBRC 13350 / KCC S-0626 / ISP 5235).